Reading from the N-terminus, the 509-residue chain is Heat shock 70 kDa protein 14 (509 aa).

It belongs to the heat shock protein 70 family. As to quaternary structure, component of ribosome-associated complex (RAC), a heterodimer composed of Hsp70/DnaK-type chaperone HSPA14 and Hsp40/DnaJ-type chaperone DNAJC2.

The protein resides in the cytoplasm. It is found in the cytosol. Component of the ribosome-associated complex (RAC), a complex involved in folding or maintaining nascent polypeptides in a folding-competent state. In the RAC complex, binds to the nascent polypeptide chain, while DNAJC2 stimulates its ATPase activity. This Rattus norvegicus (Rat) protein is Heat shock 70 kDa protein 14 (Hspa14).